The sequence spans 58 residues: Single-pass membrane and coiled-coil domain-containing protein 4 homolog (58 aa).

Residues 1–31 adopt a coiled-coil conformation; the sequence is MRQLKGKVKETRKQKKERKLDNLETQAKIRT. The helical transmembrane segment at 31-51 threads the bilayer; sequence TVVLPALGVLAVFLVLFVYLK.

It belongs to the SMCO4 family.

The protein resides in the membrane. The protein is Single-pass membrane and coiled-coil domain-containing protein 4 homolog of Drosophila melanogaster (Fruit fly).